Reading from the N-terminus, the 374-residue chain is Small ribosomal subunit protein uS4m (374 aa).

The S4 RNA-binding domain occupies 259 to 323 (GRLENFLMRL…KKLYFFIKSK (65 aa)).

Belongs to the universal ribosomal protein uS4 family.

The protein localises to the mitochondrion. This is Small ribosomal subunit protein uS4m (RPS4) from Acanthamoeba castellanii (Amoeba).